The following is a 59-amino-acid chain: Large ribosomal subunit protein bL32 (59 aa).

This sequence belongs to the bacterial ribosomal protein bL32 family.

The chain is Large ribosomal subunit protein bL32 from Synechococcus sp. (strain RCC307).